The chain runs to 881 residues: Phosphoenolpyruvate carboxylase (881 aa).

Residues H138 and K545 contribute to the active site.

Belongs to the PEPCase type 1 family. Mg(2+) serves as cofactor.

It carries out the reaction oxaloacetate + phosphate = phosphoenolpyruvate + hydrogencarbonate. Forms oxaloacetate, a four-carbon dicarboxylic acid source for the tricarboxylic acid cycle. The chain is Phosphoenolpyruvate carboxylase from Shewanella oneidensis (strain ATCC 700550 / JCM 31522 / CIP 106686 / LMG 19005 / NCIMB 14063 / MR-1).